A 369-amino-acid chain; its full sequence is Anhydro-N-acetylmuramic acid kinase (369 aa).

Residue 12–19 (GTSLDGVD) coordinates ATP.

The protein belongs to the anhydro-N-acetylmuramic acid kinase family.

It carries out the reaction 1,6-anhydro-N-acetyl-beta-muramate + ATP + H2O = N-acetyl-D-muramate 6-phosphate + ADP + H(+). It participates in amino-sugar metabolism; 1,6-anhydro-N-acetylmuramate degradation. It functions in the pathway cell wall biogenesis; peptidoglycan recycling. Functionally, catalyzes the specific phosphorylation of 1,6-anhydro-N-acetylmuramic acid (anhMurNAc) with the simultaneous cleavage of the 1,6-anhydro ring, generating MurNAc-6-P. Is required for the utilization of anhMurNAc either imported from the medium or derived from its own cell wall murein, and thus plays a role in cell wall recycling. This Escherichia coli O8 (strain IAI1) protein is Anhydro-N-acetylmuramic acid kinase.